Consider the following 1203-residue polypeptide: DNA-directed RNA polymerase subunit beta' (1203 aa).

Residues C60, C62, C75, and C78 each contribute to the Zn(2+) site. Mg(2+) is bound by residues D449, D451, and D453. Positions 818, 892, 899, and 902 each coordinate Zn(2+).

Belongs to the RNA polymerase beta' chain family. The RNAP catalytic core consists of 2 alpha, 1 beta, 1 beta' and 1 omega subunit. When a sigma factor is associated with the core the holoenzyme is formed, which can initiate transcription. It depends on Mg(2+) as a cofactor. Zn(2+) is required as a cofactor.

It catalyses the reaction RNA(n) + a ribonucleoside 5'-triphosphate = RNA(n+1) + diphosphate. Functionally, DNA-dependent RNA polymerase catalyzes the transcription of DNA into RNA using the four ribonucleoside triphosphates as substrates. The sequence is that of DNA-directed RNA polymerase subunit beta' from Bacillus anthracis.